A 677-amino-acid chain; its full sequence is Pannexin-2 (677 aa).

Residues 11–47 (MATALLAGEKLRELILPGAQDDKAGALAALLLQLKLE) lie on the Cytoplasmic side of the membrane. The helical transmembrane segment at 48–70 (LPFDRVVTIGTVLVPILLVTLVF) threads the bilayer. The Extracellular segment spans residues 71–123 (TKNFAEEPIYCYTPHNFTRDQALYARGYCWTELRDALPGVDASLWPSLFEHKF). The N-linked (GlcNAc...) asparagine glycan is linked to Asn-86. A helical membrane pass occupies residues 124–146 (LPYALLAFAAIMYVPALGWEFLA). At 147-226 (STRLTSELNF…RGRSNFLAKL (80 aa)) the chain is on the cytoplasmic side. The helical transmembrane segment at 227–249 (YLARHVLILLLSAVPISYLCTYY) threads the bilayer. Over 250-292 (ATQKQNEFTCALGASPDGAAGAGPAVRVSCKLPSVQLQRIIAG) the chain is Extracellular. Residues 293–315 (VDIVLLCVMNLIILVNLIHLFIF) traverse the membrane as a helical segment. At 316–643 (RKSNFIFDKL…AREEEDGGPR (328 aa)) the chain is on the cytoplasmic side. Disordered regions lie at residues 393–423 (ATPTVRDSGVQTVDPSANPAEPDGAAEPPVV) and 454–510 (NSKA…KKHA). The segment covering 492–504 (GPGPAPAPAPPPA) has biased composition (pro residues). Position 593 is a phosphoserine (Ser-593).

Belongs to the pannexin family. As to quaternary structure, homoheptameric. S-palmitoylated in neural stem and progenitor cells. Post-translationally, cleaved by CASP3 and CASP7 during apoptosis. Cleavage has no effect on it function.

The protein localises to the cell membrane. Its subcellular location is the golgi apparatus membrane. It is found in the endoplasmic reticulum membrane. The catalysed reaction is ATP(in) = ATP(out). It catalyses the reaction chloride(in) = chloride(out). The enzyme catalyses iodide(out) = iodide(in). It carries out the reaction Na(+)(in) = Na(+)(out). The catalysed reaction is D-gluconate(in) = D-gluconate(out). Functionally, ion channel with a slight anion preference. Also able to release ATP. Plays a role in regulating neurogenesis and apoptosis in keratinocytes. This is Pannexin-2 from Homo sapiens (Human).